We begin with the raw amino-acid sequence, 1093 residues long: MADSSSSSFFPDFGLLLYLEELNKEELNTFKLFLKETMEPEHGLTPWNEVKKARREDLANLMKKYYPGEKAWSVSLKIFGKMNLKDLCERAKEEINWSAQTIGPDDAKAGETQEDQEAVLGDGTEYRNRIKEKFCITWDKKSLAGKPEDFHHGIAEKDRKLLEHLFDVDVKTGAQPQIVVLQGAAGVGKTTLVRKAMLDWAEGSLYQQRFKYVFYLNGREINQLKERSFAQLISKDWPSTEGPIEEIMYQPSSLLFIIDSFDELNFAFEEPEFALCEDWTQEHPVSFLMSSLLRKVMLPEASLLVTTRLTTSKRLKQLLKNHHYVELLGMSEDAREEYIYQFFEDKRWAMKVFSSLKSNEMLFSMCQVPLVCWAACTCLKQQMEKGGDVTLTCQTTTALFTCYISSLFTPVDGGSPSLPNQAQLRRLCQVAAKGIWTMTYVFYRENLRRLGLTQSDVSSFMDSNIIQKDAEYENCYVFTHLHVQEFFAAMFYMLKGSWEAGNPSCQPFEDLKSLLQSTSYKDPHLTQMKCFLFGLLNEDRVKQLERTFNCKMSLKIKSKLLQCMEVLGNSDYSPSQLGFLELFHCLYETQDKAFISQAMRCFPKVAINICEKIHLLVSSFCLKHCRCLRTIRLSVTVVFEKKILKTSLPTNTWDGDRITHCWQDLCSVLHTNEHLRELDLYHSNLDKSAMNILHHELRHPNCKLQKLLLKFITFPDGCQDISTSLIHNKNLMHLDLKGSDIGDNGVKSLCEALKHPECKLQTLRLESCNLTVFCCLNISNALIRSQSLIFLNLSTNNLLDDGVQLLCEALRHPKCYLERLSLESCGLTEAGCEYLSLALISNKRLTHLCLADNVLGDGGVKLMSDALQHAQCTLKSLVLRRCHFTSLSSEYLSTSLLHNKSLTHLDLGSNWLQDNGVKLLCDVFRHPSCNLQDLELMGCVLTNACCLDLASVILNNPNLRSLDLGNNDLQDDGVKILCDALRYPNCNIQRLGLEYCGLTSLCCQDLSSALICNKRLIKMNLTQNTLGYEGIVKLYKVLKSPKCKLQVLGLCKEAFDEEAQKLLEAVGVSNPHLIIKPDCNYHNEEDVSWWWCF.

The region spanning 1–97 (MADSSSSSFF…CERAKEEINW (97 aa)) is the Pyrin domain. The tract at residues 102 to 121 (IGPDDAKAGETQEDQEAVLG) is disordered. The NACHT domain maps to 177-499 (QIVVLQGAAG…MFYMLKGSWE (323 aa)). 183–190 (GAAGVGKT) serves as a coordination point for ATP. LRR repeat units lie at residues 730 to 750 (NLMH…KSLC), 759 to 780 (KLQT…NISN), 787 to 807 (SLIF…QLLC), 816 to 836 (YLER…EYLS), 844 to 864 (RLTH…KLMS), 873 to 894 (TLKS…YLST), 901 to 921 (SLTH…KLLC), 930 to 951 (NLQD…DLAS), 958 to 978 (NLRS…KILC), 987 to 1008 (NIQR…DLSS), and 1015 to 1035 (RLIK…VKLY).

This sequence belongs to the NLRP family. In terms of tissue distribution, testis-specific.

It is found in the cytoplasm. May be involved in inflammation and spermatogenesis. The sequence is that of NACHT, LRR and PYD domains-containing protein 14 (NLRP14) from Homo sapiens (Human).